Here is a 424-residue protein sequence, read N- to C-terminus: Histidine--tRNA ligase (424 aa).

This sequence belongs to the class-II aminoacyl-tRNA synthetase family. In terms of assembly, homodimer.

It localises to the cytoplasm. The catalysed reaction is tRNA(His) + L-histidine + ATP = L-histidyl-tRNA(His) + AMP + diphosphate + H(+). In Thioalkalivibrio sulfidiphilus (strain HL-EbGR7), this protein is Histidine--tRNA ligase.